A 180-amino-acid polypeptide reads, in one-letter code: Transcription factor HES-7.1-A (180 aa).

Residues 13–70 (HRKLLKPLVEKRRRERINNSLEKLRIFLFQTLKSEKLKNPKVEKAEILECTVQFLQSR) form the bHLH domain. The region spanning 84–116 (YQSGFQHCLETTLHFMNSKPDMNGVTKELLSHQ) is the Orange domain. The WRPW motif motif lies at 176-179 (WRPW).

Transcription repression requires formation of a complex with a corepressor protein of the Groucho/TLE family. In terms of tissue distribution, expressed in the presumptive midbrain-hindbrain boundary (MHB) as early as the early gastrula stage (stage 10.5). Expression in the MHB continues through to tailbud stage. Also transiently expressed in the eye anlage at late neurula stage.

Its subcellular location is the nucleus. Transcriptional repressor. Represses transcription from both N box- and E box-containing promoters. Demarcates the prospective midbrain-hindbrain boundary (MHB) region in the neuroectoderm in early gastrulae embryos by repressing transcription of a number of target genes. This Xenopus laevis (African clawed frog) protein is Transcription factor HES-7.1-A (hes7.1-a).